The following is an 82-amino-acid chain: Large ribosomal subunit protein bL31B (82 aa).

It belongs to the bacterial ribosomal protein bL31 family. Type B subfamily. As to quaternary structure, part of the 50S ribosomal subunit after the end of exponential growth.

Its function is as follows. While neither of the L31 paralogs is essential, this protein does not seem to function as the main L31 protein. Has a higher affinity for 70S ribosomes than the zinc-containing L31 paralog; is able to displace it to varying extents, even under zinc-replete conditions. In Bacillus subtilis (strain 168), this protein is Large ribosomal subunit protein bL31B (rpmE2).